Reading from the N-terminus, the 229-residue chain is UPF0758 protein MA_1979 (229 aa).

Residues 106 to 228 (KICSPKDVYA…YVSLKDEGFV (123 aa)) enclose the MPN domain. Residues H177, H179, and D190 each coordinate Zn(2+). A JAMM motif motif is present at residues 177-190 (HNHPSGDPSPSRED).

Belongs to the UPF0758 family.

The polypeptide is UPF0758 protein MA_1979 (Methanosarcina acetivorans (strain ATCC 35395 / DSM 2834 / JCM 12185 / C2A)).